We begin with the raw amino-acid sequence, 135 residues long: Large ribosomal subunit protein uL16c (135 aa).

This sequence belongs to the universal ribosomal protein uL16 family. Part of the 50S ribosomal subunit.

The protein localises to the plastid. The protein resides in the chloroplast. The chain is Large ribosomal subunit protein uL16c from Coffea arabica (Arabian coffee).